The primary structure comprises 74 residues: NADH dehydrogenase [ubiquinone] 1 alpha subcomplex assembly factor 8 (74 aa).

The region spanning 22 to 69 (LAACGAEAAAYGRCVQASTAPGGRLSKDFCAREFEALRSCFAAAAKKT) is the CHCH domain. Short sequence motifs (cx9C motif) lie at residues 25 to 35 (CGAEAAAYGRC) and 51 to 61 (CAREFEALRSC). 2 disulfides stabilise this stretch: Cys25–Cys61 and Cys35–Cys51.

As to quaternary structure, interacts with NDUFAF5.

It localises to the mitochondrion. In terms of biological role, involved in the assembly of mitochondrial NADH:ubiquinone oxidoreductase complex (complex I, MT-ND1). Required to stabilize NDUFAF5. This Homo sapiens (Human) protein is NADH dehydrogenase [ubiquinone] 1 alpha subcomplex assembly factor 8.